A 154-amino-acid chain; its full sequence is Aspartate carbamoyltransferase regulatory chain (154 aa).

Cys109, Cys114, Cys138, and Cys141 together coordinate Zn(2+).

This sequence belongs to the PyrI family. In terms of assembly, contains catalytic and regulatory chains. Zn(2+) is required as a cofactor.

Its function is as follows. Involved in allosteric regulation of aspartate carbamoyltransferase. This chain is Aspartate carbamoyltransferase regulatory chain, found in Aliivibrio salmonicida (strain LFI1238) (Vibrio salmonicida (strain LFI1238)).